The sequence spans 1109 residues: Receptor-like protein kinase (1109 aa).

Residues 1-20 (MKVAVNTFLLFLCSTSSIYA) form the signal peptide. Residues 21–764 (AFALNSDGAA…GGLSTLGIAM (744 aa)) are Extracellular-facing. Asparagine 50, asparagine 74, and asparagine 114 each carry an N-linked (GlcNAc...) asparagine glycan. 6 LRR repeats span residues 69 to 92 (FVDT…SHLK), 93 to 115 (HLKK…LGNC), 117 to 140 (LLEH…GALQ), 141 to 162 (NLRN…SLLS), 165 to 187 (HLET…IGNM), and 189 to 209 (ELTT…SSLG). N-linked (GlcNAc...) asparagine glycans are attached at residues asparagine 144, asparagine 177, and asparagine 186. Residue asparagine 210 is glycosylated (N-linked (GlcNAc...) asparagine). LRR repeat units lie at residues 213-236 (TLQE…NNLE), 237-258 (NLVY…DFVS), 261-284 (QIDT…GNCT), 309-331 (KLDT…LGKC), 333-355 (SMID…LGML), 357-378 (QLQY…SIWK), 381-404 (SLQS…TELK), 405-427 (QLVS…LGAN), 429-451 (SLEV…LCSQ), 453-476 (KLKR…GGCS), 477-499 (TLER…VEKQ), 500-523 (NLLF…GNLK), 524-546 (NVTA…LGSL), 548-569 (KLEH…ELSN), 572-595 (KLSE…GSLT), 596-618 (ELTK…LFQS), 620-642 (KLLN…GALQ), 643-666 (ALRS…GKLK), 667-689 (MLEE…STIQ), and 690-710 (SLTF…PSLT). Residues asparagine 245 and asparagine 282 are each glycosylated (N-linked (GlcNAc...) asparagine). 3 N-linked (GlcNAc...) asparagine glycosylation sites follow: asparagine 367, asparagine 391, and asparagine 427. 4 N-linked (GlcNAc...) asparagine glycosylation sites follow: asparagine 510, asparagine 524, asparagine 553, and asparagine 584. Asparagine 648, asparagine 677, and asparagine 695 each carry an N-linked (GlcNAc...) asparagine glycan. Residues 765–785 (IVLGALLFIICLFLFSAFLFL) form a helical membrane-spanning segment. Residues 786–1109 (HCKKSVQEIA…YSSSVRNKSK (324 aa)) are Cytoplasmic-facing. One can recognise a Protein kinase domain in the interval 816–1096 (LNDKYVIGKG…DVVKQLTRWS (281 aa)). Residues 822-830 (IGKGAHGTI) and lysine 845 each bind ATP. Residues 827–850 (HGTIYKATLSPDKVYAVKKLVFTG) form an LRR 27 repeat. Aspartate 942 functions as the Proton acceptor in the catalytic mechanism. The LRR 28 repeat unit spans residues 958-981 (ISDFGIAKLLDQSATSIPSNTVQG).

The protein belongs to the protein kinase superfamily. Ser/Thr protein kinase family. As to expression, INRPK1 and INRPK1b are expressed in leaves, cotyledons, shoot tips and roots from induced and vegetative plants. The highest concentrations of INRPK1 are found in vegetative roots, and the lowest concentrations in vegetative cotyledons. INRPK1b is more abundant in roots than other tissues. INRPK1a is expressed in vegetative roots. INRPK1c is expressed in cotyledons.

It is found in the cell membrane. It localises to the secreted. The enzyme catalyses L-seryl-[protein] + ATP = O-phospho-L-seryl-[protein] + ADP + H(+). It carries out the reaction L-threonyl-[protein] + ATP = O-phospho-L-threonyl-[protein] + ADP + H(+). Possible role in short-day photoperiod floral induction. This Ipomoea nil (Japanese morning glory) protein is Receptor-like protein kinase (INRPK1).